Consider the following 401-residue polypeptide: (1R,4R,5S)-(-)-guaia-6,10(14)-diene synthase (401 aa).

Asp-134 and Glu-139 together coordinate Mg(2+). Positions 134-138 (DDQFD) match the DDXXD motif motif. Arg-242 is a substrate binding site. Positions 288 and 292 each coordinate Mg(2+). Lys-295 provides a ligand contact to substrate. A Mg(2+)-binding site is contributed by Asp-296. A substrate-binding site is contributed by 375–376 (RY).

Belongs to the terpene synthase family. Mg(2+) serves as cofactor.

The catalysed reaction is (2E,6E)-farnesyl diphosphate = (1R,4R,5S)-(-)-guaia-6,10(14)-diene + diphosphate. The protein operates within secondary metabolite biosynthesis; terpenoid biosynthesis. Functionally, catalyzes the conversion of (2E,6E)-farnesyl diphosphate (FPP) to yield the bicyclic sesquiterpene guaia-6,10(14)-diene via a 1,10-cyclization, which requires the abstraction of the pyrophosphate from FPP to yield the (E,E)-germacradienyl cation. The only accepted substrate is farnesyl diphosphate (FPP). This chain is (1R,4R,5S)-(-)-guaia-6,10(14)-diene synthase, found in Fusarium mangiferae (Mango malformation disease fungus).